The sequence spans 952 residues: Meiotic coiled-coil protein 3 (952 aa).

Coiled-coil stretches lie at residues 283-611 (QLLQ…KEHL), 684-716 (TKKF…EDKL), and 839-942 (SLEN…RERE).

Its subcellular location is the cytoplasm. Functionally, has a role in meiosis. This chain is Meiotic coiled-coil protein 3 (mcp3), found in Schizosaccharomyces pombe (strain 972 / ATCC 24843) (Fission yeast).